Consider the following 101-residue polypeptide: Small ribosomal subunit protein uS14 (101 aa).

Belongs to the universal ribosomal protein uS14 family. In terms of assembly, part of the 30S ribosomal subunit. Contacts proteins S3 and S10.

Functionally, binds 16S rRNA, required for the assembly of 30S particles and may also be responsible for determining the conformation of the 16S rRNA at the A site. This is Small ribosomal subunit protein uS14 from Cupriavidus necator (strain ATCC 17699 / DSM 428 / KCTC 22496 / NCIMB 10442 / H16 / Stanier 337) (Ralstonia eutropha).